A 172-amino-acid polypeptide reads, in one-letter code: S-ribosylhomocysteine lyase (172 aa).

Residues His-54, His-58, and Cys-128 each contribute to the Fe cation site.

The protein belongs to the LuxS family. Homodimer. It depends on Fe cation as a cofactor.

It catalyses the reaction S-(5-deoxy-D-ribos-5-yl)-L-homocysteine = (S)-4,5-dihydroxypentane-2,3-dione + L-homocysteine. Involved in the synthesis of autoinducer 2 (AI-2) which is secreted by bacteria and is used to communicate both the cell density and the metabolic potential of the environment. The regulation of gene expression in response to changes in cell density is called quorum sensing. Catalyzes the transformation of S-ribosylhomocysteine (RHC) to homocysteine (HC) and 4,5-dihydroxy-2,3-pentadione (DPD). The sequence is that of S-ribosylhomocysteine lyase from Photobacterium profundum (strain SS9).